A 91-amino-acid chain; its full sequence is Large ribosomal subunit protein uL22 (91 aa).

This sequence belongs to the universal ribosomal protein uL22 family. Part of the 50S ribosomal subunit.

In terms of biological role, this protein binds specifically to 23S rRNA; its binding is stimulated by other ribosomal proteins, e.g. L4, L17, and L20. It is important during the early stages of 50S assembly. It makes multiple contacts with different domains of the 23S rRNA in the assembled 50S subunit and ribosome. Its function is as follows. The globular domain of the protein is located near the polypeptide exit tunnel on the outside of the subunit, while an extended beta-hairpin is found that lines the wall of the exit tunnel in the center of the 70S ribosome. The chain is Large ribosomal subunit protein uL22 (rplV) from Loofah witches'-broom phytoplasma.